The following is a 476-amino-acid chain: Mitochondrial-processing peptidase subunit beta (476 aa).

The N-terminal 28 residues, 1-28, are a transit peptide targeting the mitochondrion; that stretch reads MASRRLALNLAQGVKARAGGVINPFRRG. Residue H84 coordinates Zn(2+). Catalysis depends on E87, which acts as the Proton acceptor. Residues H88 and E164 each coordinate Zn(2+).

The protein belongs to the peptidase M16 family. As to quaternary structure, heterodimer of mpp (alpha) and pep (beta) subunits, forming the mitochondrial processing protease (MPP) in which mpp is involved in substrate recognition and binding and pep is the catalytic subunit. Component of the ubiquinol-cytochrome c oxidoreductase (cytochrome b-c1 complex, complex III, CIII), a multisubunit enzyme composed of 10 subunits. The complex is composed of 3 respiratory subunits cytochrome b (cob), cytochrome c1 (cyt-1) and Rieske protein (fes-1), 2 core protein subunits pep and ucr-1, and 5 low-molecular weight protein subunits qcr6, qcr7, qcr8, qcr9 and probably NCU16844/qcr10. The complex exists as an obligatory dimer and forms supercomplexes (SCs) in the inner mitochondrial membrane with NADH-ubiquinone oxidoreductase (complex I, CI) and cytochrome c oxidase (complex IV, CIV), resulting in different assemblies (supercomplexes SCI(1)III(2), SCIII(2)IV(1) and SCIII(2)IV(2) as well as higher order I(x)III(y)IV(z) megacomplexes). It depends on Zn(2+) as a cofactor.

Its subcellular location is the mitochondrion matrix. The protein localises to the mitochondrion inner membrane. It carries out the reaction Release of N-terminal transit peptides from precursor proteins imported into the mitochondrion, typically with Arg in position P2.. Binding to mpp is required for catalytic activity. Inhibited by metal chelator ethylenediaminetetraacetic acid (EDTA). Its function is as follows. Catalytic subunit of the essential mitochondrial processing protease (MPP), which cleaves the mitochondrial sequence off newly imported precursors proteins. Preferentially, cleaves after an arginine at position P2. In terms of biological role, component of the ubiquinol-cytochrome c oxidoreductase, a multisubunit transmembrane complex that is part of the mitochondrial electron transport chain which drives oxidative phosphorylation. The respiratory chain contains 3 multisubunit complexes succinate dehydrogenase (complex II, CII), ubiquinol-cytochrome c oxidoreductase (cytochrome b-c1 complex, complex III, CIII) and cytochrome c oxidase (complex IV, CIV), that cooperate to transfer electrons derived from NADH and succinate to molecular oxygen, creating an electrochemical gradient over the inner membrane that drives transmembrane transport and the ATP synthase. The cytochrome b-c1 complex catalyzes electron transfer from ubiquinol to cytochrome c, linking this redox reaction to translocation of protons across the mitochondrial inner membrane, with protons being carried across the membrane as hydrogens on the quinol. In the process called Q cycle, 2 protons are consumed from the matrix, 4 protons are released into the intermembrane space and 2 electrons are passed to cytochrome c. This is Mitochondrial-processing peptidase subunit beta from Neurospora crassa (strain ATCC 24698 / 74-OR23-1A / CBS 708.71 / DSM 1257 / FGSC 987).